The following is a 450-amino-acid chain: Ig mu chain C region (450 aa).

The polypeptide is Ig mu chain C region (Canis lupus familiaris (Dog)).